Reading from the N-terminus, the 62-residue chain is Conotoxin Mi5.2 (62 aa).

The first 19 residues, 1–19 (MRCVPVFIILLLLIPSASS), serve as a signal peptide directing secretion. Positions 20-50 (VDVQPLTRDDVPLASFLDDARRTLRSPWMTR) are excised as a propeptide.

Belongs to the conotoxin T superfamily. Post-translationally, contains 2 disulfide bonds that can be either 'C1-C3, C2-C4' or 'C1-C4, C2-C3', since these disulfide connectivities have been observed for conotoxins with cysteine framework V (for examples, see AC P0DQQ7 and AC P81755). As to expression, expressed by the venom duct.

It localises to the secreted. This Conus miles (Soldier cone) protein is Conotoxin Mi5.2.